The chain runs to 122 residues: Basic phospholipase A2 F15 (122 aa).

Intrachain disulfides connect cysteine 26–cysteine 115, cysteine 28–cysteine 44, cysteine 43–cysteine 95, cysteine 49–cysteine 122, cysteine 50–cysteine 88, cysteine 57–cysteine 81, and cysteine 75–cysteine 86. Ca(2+) is bound by residues tyrosine 27, glycine 29, and glycine 31. The active site involves histidine 47. Residue aspartate 48 coordinates Ca(2+). Aspartate 89 is an active-site residue.

Belongs to the phospholipase A2 family. Group II subfamily. D49 sub-subfamily. In terms of assembly, when this protein is associated with crotapotin (F5 or F7), it forms the crotoxin protein. Requires Ca(2+) as cofactor. In terms of tissue distribution, expressed by the venom gland.

The protein localises to the secreted. It carries out the reaction a 1,2-diacyl-sn-glycero-3-phosphocholine + H2O = a 1-acyl-sn-glycero-3-phosphocholine + a fatty acid + H(+). Activated by heparin. Inhibited by its chaperone crotapotin. In terms of biological role, snake venom phospholipase A2 (PLA2) that shows moderate neurotoxic activity in isolated mouse phrenic nerve diaphragm but shows high neurotoxic activity in a chick biventer cervis preparation. Also shows a high bactericidal effect against both Gram-negative and Gram-positive bacteria. PLA2 catalyzes the calcium-dependent hydrolysis of the 2-acyl groups in 3-sn-phosphoglycerides. This Crotalus durissus terrificus (South American rattlesnake) protein is Basic phospholipase A2 F15.